Consider the following 246-residue polypeptide: Orotidine 5'-phosphate decarboxylase (246 aa).

Substrate-binding positions include Asp-22, Lys-44, 71–80 (DLKYHDIPHT), Thr-130, Arg-191, Gln-201, Gly-221, and Arg-222. The active-site Proton donor is Lys-73.

The protein belongs to the OMP decarboxylase family. Type 1 subfamily. In terms of assembly, homodimer.

The enzyme catalyses orotidine 5'-phosphate + H(+) = UMP + CO2. It participates in pyrimidine metabolism; UMP biosynthesis via de novo pathway; UMP from orotate: step 2/2. Its function is as follows. Catalyzes the decarboxylation of orotidine 5'-monophosphate (OMP) to uridine 5'-monophosphate (UMP). This Neisseria meningitidis serogroup C (strain 053442) protein is Orotidine 5'-phosphate decarboxylase.